A 565-amino-acid polypeptide reads, in one-letter code: DNA ligase B (565 aa).

Residue K130 is the N6-AMP-lysine intermediate of the active site.

Belongs to the NAD-dependent DNA ligase family. LigB subfamily.

It carries out the reaction NAD(+) + (deoxyribonucleotide)n-3'-hydroxyl + 5'-phospho-(deoxyribonucleotide)m = (deoxyribonucleotide)n+m + AMP + beta-nicotinamide D-nucleotide.. Catalyzes the formation of phosphodiester linkages between 5'-phosphoryl and 3'-hydroxyl groups in double-stranded DNA using NAD as a coenzyme and as the energy source for the reaction. The protein is DNA ligase B of Yersinia enterocolitica serotype O:8 / biotype 1B (strain NCTC 13174 / 8081).